The following is a 103-amino-acid chain: Large ribosomal subunit protein uL24 (103 aa).

The protein belongs to the universal ribosomal protein uL24 family. In terms of assembly, part of the 50S ribosomal subunit.

In terms of biological role, one of two assembly initiator proteins, it binds directly to the 5'-end of the 23S rRNA, where it nucleates assembly of the 50S subunit. Its function is as follows. One of the proteins that surrounds the polypeptide exit tunnel on the outside of the subunit. The protein is Large ribosomal subunit protein uL24 of Latilactobacillus sakei subsp. sakei (strain 23K) (Lactobacillus sakei subsp. sakei).